We begin with the raw amino-acid sequence, 112 residues long: C-C motif chemokine 27 (112 aa).

A signal peptide spans 1–24; sequence MKGPPTFCSLLLLSLLLSPDPTAA. 2 disulfide bridges follow: Cys33/Cys62 and Cys34/Cys77.

This sequence belongs to the intercrine beta (chemokine CC) family. As to quaternary structure, monomer, dimer, and tetramer. Heparin avidly promotes oligomerization. Interacts with TNFAIP6 (via Link domain). In terms of tissue distribution, testis, thymus, placenta, ovary and skin.

The protein localises to the secreted. Its function is as follows. Chemotactic factor that attracts skin-associated memory T-lymphocytes. May play a role in mediating homing of lymphocytes to cutaneous sites. Binds to CCR10. The sequence is that of C-C motif chemokine 27 (CCL27) from Homo sapiens (Human).